Here is a 55-residue protein sequence, read N- to C-terminus: UPF0391 membrane protein Tbd_2772 (55 aa).

The next 2 helical transmembrane spans lie at 1-21 and 28-48; these read MFGW…FGFA and AWIA…MLVM.

Belongs to the UPF0391 family.

It is found in the cell membrane. The polypeptide is UPF0391 membrane protein Tbd_2772 (Thiobacillus denitrificans (strain ATCC 25259 / T1)).